The primary structure comprises 424 residues: MSNYYYYYGGGRYDWLKTVEPTNFLKIGLPYQAHPLHLQHQATTPPSILEKFKRADILLNEVKAEMDPLMLQPETEKKLFQILSSIDMFKGLRKKVEFTYNAQIVTNAWLKMYELLNTMNFNNTSQAFCNCELPGGFISAINHFNYTMMHYPTFNWVASSLYPSSETDALEDHYGLYQCNPDNWLMQSPLLKKNMDYNNGDVTIASNVKNLALRATQRLTPIHLYTADGGINVGHDYNKQEELNLKLHFGQALTGLLSLSKGGNMILKHYTLNHAFTLSLICVFSHFFEELYITKPTSSRPTNSETYIVGKNRLRLFTPKEEQVLLKRLEFFNDTPLVDLSLYQNLLESVYFAVETIHLKQQIEFLNFGMKCYRHFYNKIKLLNDYLAPKKKIFQDRWRVLNKLYVLEKKHKLKLCAASQGSVA.

One can recognise an Adrift-type SAM-dependent 2'-O-MTase domain in the interval 103 to 315 (QIVTNAWLKM…TYIVGKNRLR (213 aa)). Residues Gly-135 and Asp-228 each contribute to the S-adenosyl-L-methionine site. Lys-268 acts as the Proton acceptor in catalysis.

It is found in the virion. In Ornithodoros (relapsing fever ticks), this protein is Probable methyltransferase EP424R.